The sequence spans 157 residues: Ribosome maturation factor RimP (157 aa).

The protein belongs to the RimP family.

It is found in the cytoplasm. Functionally, required for maturation of 30S ribosomal subunits. This is Ribosome maturation factor RimP from Levilactobacillus brevis (strain ATCC 367 / BCRC 12310 / CIP 105137 / JCM 1170 / LMG 11437 / NCIMB 947 / NCTC 947) (Lactobacillus brevis).